Here is a 185-residue protein sequence, read N- to C-terminus: Translocon-associated protein subunit gamma (185 aa).

Position 1 is an N-acetylmethionine (methionine 1). Topologically, residues 1 to 27 (MAPKGGPKQQSEEDLLLQDFSRNLSAK) are lumenal. Serine 11 bears the Phosphoserine mark. Residues 28–48 (SSALFFGNAFIVSAIPIWLYW) form a helical membrane-spanning segment. At 49-54 (RIWHMD) the chain is on the cytoplasmic side. The chain crosses the membrane as a helical span at residues 55-76 (LIQSAVLYSVMTLVSTYLVAFA). The Lumenal portion of the chain corresponds to 77–135 (YKNVKFVLKHKVAQKREDAVSKEVTRKLSEADNRKMSRKEKDERILWKKNEVADYEATT). Serine 105 is modified (phosphoserine). The chain crosses the membrane as a helical span at residues 136–157 (FSIFYNNTLFLVLVIVASFFIL). Topologically, residues 158–163 (KNFNPT) are cytoplasmic. A helical transmembrane segment spans residues 164-184 (VNYILSISASSGLIALLSTGS).

The protein belongs to the TRAP-gamma family. In terms of assembly, heterotetramer of TRAP-alpha, TRAP-beta, TRAP-delta and TRAP-gamma.

The protein localises to the endoplasmic reticulum membrane. In terms of biological role, TRAP proteins are part of a complex whose function is to bind calcium to the ER membrane and thereby regulate the retention of ER resident proteins. The chain is Translocon-associated protein subunit gamma (SSR3) from Bos taurus (Bovine).